The following is a 193-amino-acid chain: Putative anthranilate synthase component II (193 aa).

The Glutamine amidotransferase type-1 domain occupies 2 to 193 (KLLIINNHDS…WLAIPPTTNP (192 aa)). Catalysis depends on residues cysteine 78, histidine 168, and glutamate 170.

In terms of assembly, tetramer of two components I and two components II.

It catalyses the reaction chorismate + L-glutamine = anthranilate + pyruvate + L-glutamate + H(+). Its pathway is amino-acid biosynthesis; L-tryptophan biosynthesis; L-tryptophan from chorismate: step 1/5. The chain is Putative anthranilate synthase component II from Haemophilus influenzae (strain ATCC 51907 / DSM 11121 / KW20 / Rd).